The sequence spans 126 residues: UPF0102 protein BH12350 (126 aa).

The protein belongs to the UPF0102 family.

The polypeptide is UPF0102 protein BH12350 (Bartonella henselae (strain ATCC 49882 / DSM 28221 / CCUG 30454 / Houston 1) (Rochalimaea henselae)).